The sequence spans 428 residues: Endoplasmic reticulum junction formation protein lunapark (428 aa).

The N-myristoyl glycine moiety is linked to residue G2. Over 2 to 45 the chain is Cytoplasmic; it reads GGLFSRWRTKLSTVEVLESIDKEIQALEEFREKNQRLQKLRVGR. Positions 16–43 form a coiled coil; it reads EVLESIDKEIQALEEFREKNQRLQKLRV. Residues 46 to 66 traverse the membrane as a helical segment; sequence LILYSSVLYLFTCLIVYLWYL. The Lumenal portion of the chain corresponds to 67-77; sequence PDEFTARLAMT. The helical transmembrane segment at 78-98 threads the bilayer; it reads LPFFAFPLIIWSIRTVIIFFF. Residues 99–428 are Cytoplasmic-facing; it reads SKRTERNNEA…ELNGESLTAE (330 aa). The stretch at 102-128 forms a coiled coil; it reads TERNNEALDDLKSQRKKILEEVMEKET. S114, S153, S177, S182, and S194 each carry phosphoserine. The tract at residues 143–248 is disordered; the sequence is SKKAKECEPP…PPGPPLARPI (106 aa). A compositionally biased stretch (pro residues) spans 185–198; it reads QGPPPQVPVSPGPP. Residues T211 and T213 each carry the phosphothreonine modification. S217 and S227 each carry phosphoserine. The C4-type; plays a role in ER morphology zinc-finger motif lies at 276–301; it reads CQQCFSHNGMALKEEFEYIAFRCAYC. Phosphoserine is present on residues S321, S353, and S384. A disordered region spans residues 361-428; it reads NNTEQTDDKI…ELNGESLTAE (68 aa). The segment covering 386–401 has biased composition (acidic residues); the sequence is SEEPEEKQETENEEAS. Position 414 is a phosphoserine (S414).

This sequence belongs to the lunapark family. In terms of assembly, homodimer; homodimerization requires the C4-type zinc finger motif and decreases during mitosis in a phosphorylation-dependent manner. Post-translationally, myristoylated; myristoylation is necessary for the endoplasmic reticulum (ER) three-way ER tubular junction formation, but is not required neither for membrane translocation, membrane topology formation, nor for the specific localization to ER membranes. Phosphorylated. Phosphorylation occurs at Ser-177, Ser-182, Ser-217, Ser-227, Ser-321 and Ser-384 during interphase. Phosphorylation occurs at Ser-114, Ser-153, Ser-194, Thr-211 and Ser-353 during mitosis; these phosphorylations reduce both its homodimerization and the ER three-way tubular junction formation. In terms of processing, subject to proteasomal degradation following phosphorylation during mitosis.

It is found in the endoplasmic reticulum membrane. Functionally, endoplasmic reticulum (ER)-shaping membrane protein that plays a role in determining ER morphology. Involved in the stabilization of nascent three-way ER tubular junctions within the ER network. May also play a role as a curvature-stabilizing protein within three-way ER tubular junction network. May be involved in limb and central nervous system development. The protein is Endoplasmic reticulum junction formation protein lunapark of Pongo abelii (Sumatran orangutan).